Reading from the N-terminus, the 388-residue chain is Chorismate synthase (388 aa).

NADP(+) contacts are provided by arginine 39 and arginine 45. Residues 132-134 (RSS), 251-252 (NA), glycine 296, 311-315 (KPIPT), and arginine 337 contribute to the FMN site.

It belongs to the chorismate synthase family. Homotetramer. Requires FMNH2 as cofactor.

It carries out the reaction 5-O-(1-carboxyvinyl)-3-phosphoshikimate = chorismate + phosphate. The protein operates within metabolic intermediate biosynthesis; chorismate biosynthesis; chorismate from D-erythrose 4-phosphate and phosphoenolpyruvate: step 7/7. Catalyzes the anti-1,4-elimination of the C-3 phosphate and the C-6 proR hydrogen from 5-enolpyruvylshikimate-3-phosphate (EPSP) to yield chorismate, which is the branch point compound that serves as the starting substrate for the three terminal pathways of aromatic amino acid biosynthesis. This reaction introduces a second double bond into the aromatic ring system. The polypeptide is Chorismate synthase (Staphylococcus aureus (strain bovine RF122 / ET3-1)).